A 429-amino-acid polypeptide reads, in one-letter code: DNA polymerase delta small subunit (429 aa).

It belongs to the DNA polymerase delta/II small subunit family. Heterodimer with subunits of 125 kDa and 50 kDa.

The protein localises to the nucleus. The catalysed reaction is DNA(n) + a 2'-deoxyribonucleoside 5'-triphosphate = DNA(n+1) + diphosphate. The function of the small subunit is not yet clear. The protein is DNA polymerase delta small subunit (POLD2) of Oryza sativa subsp. japonica (Rice).